The primary structure comprises 231 residues: 4-aminobenzoate synthase (231 aa).

Fe(2+) is bound by residues Glu81, His88, Glu142, His174, Asp178, and His181.

This sequence belongs to the CADD family. As to quaternary structure, homodimer. During infection, interacts with death domains of mammalian tumor necrosis factor (TNF) family receptors Fas, DR4, DR5 and to some extent TNFR1, but not with the respective downstream adapters. Fe(2+) serves as cofactor. It depends on Mn(2+) as a cofactor.

It is found in the secreted. The protein resides in the host cytoplasm. The protein is a cosubstrate rather than a true enzyme and is left in an inactive state after a single turnover. Inactive under anaerobic conditions. Its function is as follows. Involved in de novo para-aminobenzoate (PABA) biosynthesis. Acts as a self-sacrificing or 'suicide' enzyme that utilizes its own active site tyrosine residue(s) as the substrate for PABA synthesis. The side chain of the tyrosine residue is released from the protein backbone via cleavage of the C(alpha)-C(beta) bond, leaving a glycine in place of the original tyrosine residue. Reaction requires O(2) and a reduced dimetal cofactor. In terms of biological role, was also identified as a specific toxin that associates with death domains of tumor necrosis factor family (TNF) receptors and induces apoptosis in mammalian cell lines through a Caspase-dependent mechanism. The polypeptide is 4-aminobenzoate synthase (Chlamydia trachomatis serovar D (strain ATCC VR-885 / DSM 19411 / UW-3/Cx)).